A 438-amino-acid chain; its full sequence is Actin-like protein 7A (438 aa).

The tract at residues Ala36 to Pro56 is required for interaction with TES.

It belongs to the actin family. In terms of assembly, interacts (via N-terminus) with TES (via LIM domain 2). Heterodimer with TES; the heterodimer interacts with ENAH to form a heterotrimer. Interacts with ACTL9. Interacts with CYLC1; the interaction may be relevant for proper acrosome attachment to the nuclear envelope.

It localises to the cytoplasm. Its subcellular location is the cytoskeleton. It is found in the golgi apparatus. The protein resides in the nucleus. Functionally, essential for normal spermatogenesis and male fertility. Required for normal sperm head morphology, acroplaxome formation, acrosome attachment, and acrosome granule stability. May anchor and stabilize acrosomal adherence to the acroplaxome at least in part by facilitating the presence of F-actin in the subacrosomal space. May play an important role in formation and fusion of Golgi-derived vesicles during acrosome biogenesis. The protein is Actin-like protein 7A (ACTL7A) of Bos taurus (Bovine).